Reading from the N-terminus, the 488-residue chain is (S)-N-methylcoclaurine 3'-hydroxylase isozyme 2 (488 aa).

A helical membrane pass occupies residues 3-23; sequence VVTVALIAVIISSILYLLFGS. Heme is bound at residue C430.

It belongs to the cytochrome P450 family. Requires heme as cofactor.

The protein resides in the endoplasmic reticulum membrane. The protein localises to the microsome membrane. It catalyses the reaction (S)-N-methylcoclaurine + reduced [NADPH--hemoprotein reductase] + O2 = (S)-3'-hydroxy-N-methylcoclaurine + oxidized [NADPH--hemoprotein reductase] + H2O + H(+). The protein operates within alkaloid biosynthesis; (S)-reticuline biosynthesis; (S)-reticuline from (S)-norcoclaurine: step 3/4. Functionally, 3'-hydroxylation of (S)-N-methylcoclaurine. In Eschscholzia californica (California poppy), this protein is (S)-N-methylcoclaurine 3'-hydroxylase isozyme 2 (CYP80B2).